Here is a 179-residue protein sequence, read N- to C-terminus: ATP-dependent protease subunit HslV (179 aa).

Residue Thr-5 is part of the active site. Na(+) contacts are provided by Cys-164 and Thr-167.

It belongs to the peptidase T1B family. HslV subfamily. A double ring-shaped homohexamer of HslV is capped on each side by a ring-shaped HslU homohexamer. The assembly of the HslU/HslV complex is dependent on binding of ATP.

Its subcellular location is the cytoplasm. It carries out the reaction ATP-dependent cleavage of peptide bonds with broad specificity.. Allosterically activated by HslU binding. Its function is as follows. Protease subunit of a proteasome-like degradation complex believed to be a general protein degrading machinery. The chain is ATP-dependent protease subunit HslV from Carboxydothermus hydrogenoformans (strain ATCC BAA-161 / DSM 6008 / Z-2901).